The chain runs to 319 residues: Melanoma-associated antigen B2 (319 aa).

A compositionally biased stretch (basic residues) spans 1-17; the sequence is MPRGQKSKLRAREKRRK. The disordered stretch occupies residues 1 to 112; the sequence is MPRGQKSKLR…TKSPSEDPLT (112 aa). Low complexity-rich tracts occupy residues 39-57, 67-79, and 94-105; these read PCCS…PAAG, TTAA…VSST, and ASSSQASTSTKS. Phosphoserine occurs at positions 77 and 105. One can recognise an MAGE domain in the interval 111-310; sequence LTRKSGSLVQ…CAFPTHYEEA (200 aa).

As to quaternary structure, interacts with TRIM28. In terms of tissue distribution, expressed in testis and placenta, and in a significant fraction of tumors of various histologic types.

Functionally, may enhance ubiquitin ligase activity of RING-type zinc finger-containing E3 ubiquitin-protein ligases. Proposed to act through recruitment and/or stabilization of the Ubl-conjugating enzyme (E2) at the E3:substrate complex. This Homo sapiens (Human) protein is Melanoma-associated antigen B2 (MAGEB2).